The chain runs to 246 residues: Biosynthetic peptidoglycan transglycosylase (246 aa).

Residues 28 to 48 (FALFLVLFLSSVVLFRFVPVP) traverse the membrane as a helical segment.

Belongs to the glycosyltransferase 51 family.

Its subcellular location is the cell inner membrane. The enzyme catalyses [GlcNAc-(1-&gt;4)-Mur2Ac(oyl-L-Ala-gamma-D-Glu-L-Lys-D-Ala-D-Ala)](n)-di-trans,octa-cis-undecaprenyl diphosphate + beta-D-GlcNAc-(1-&gt;4)-Mur2Ac(oyl-L-Ala-gamma-D-Glu-L-Lys-D-Ala-D-Ala)-di-trans,octa-cis-undecaprenyl diphosphate = [GlcNAc-(1-&gt;4)-Mur2Ac(oyl-L-Ala-gamma-D-Glu-L-Lys-D-Ala-D-Ala)](n+1)-di-trans,octa-cis-undecaprenyl diphosphate + di-trans,octa-cis-undecaprenyl diphosphate + H(+). Its pathway is cell wall biogenesis; peptidoglycan biosynthesis. Its function is as follows. Peptidoglycan polymerase that catalyzes glycan chain elongation from lipid-linked precursors. This is Biosynthetic peptidoglycan transglycosylase from Pasteurella multocida (strain Pm70).